Here is a 205-residue protein sequence, read N- to C-terminus: Outer-membrane lipoprotein carrier protein (205 aa).

A signal peptide spans M1–A19.

This sequence belongs to the LolA family. Monomer.

The protein localises to the periplasm. In terms of biological role, participates in the translocation of lipoproteins from the inner membrane to the outer membrane. Only forms a complex with a lipoprotein if the residue after the N-terminal Cys is not an aspartate (The Asp acts as a targeting signal to indicate that the lipoprotein should stay in the inner membrane). This chain is Outer-membrane lipoprotein carrier protein, found in Francisella tularensis subsp. holarctica (strain LVS).